Reading from the N-terminus, the 2225-residue chain is Multifunctional protein CAD (2225 aa).

An N-acetylalanine modification is found at A2. Positions 2-365 are GATase (Glutamine amidotransferase); it reads AALVLEDGSV…TVKEATAGNP (364 aa). L-glutamine contacts are provided by S44, G222, and G224. Residues 177 to 363 enclose the Glutamine amidotransferase type-1 domain; that stretch reads RILALDCGLK…LETVKEATAG (187 aa). Residue C252 is the Nucleophile; for GATase activity of the active site. L253, Q256, N294, G296, and F297 together coordinate L-glutamine. Residues H336 and E338 each act as for GATase activity in the active site. Positions 366–394 are linker; sequence GGQTVRERLTERLCPPGIPTPGSGLPPPR. The tract at residues 395 to 933 is CPSase A; the sequence is KVLILGSGGL…TTHDLTFRTP (539 aa). Residues 395-1455 are CPSase (Carbamoyl phosphate synthase); the sequence is KVLILGSGGL…APPLKVHVDC (1061 aa). T456 is subject to Phosphothreonine; by MAPK1. ATP contacts are provided by R515, R555, G561, G562, K592, E599, G625, I626, H627, Q668, and E682. Residues 519–711 enclose the ATP-grasp 1 domain; that stretch reads AARMAEIGEH…LAYVAAKLAL (193 aa). Mg(2+) contacts are provided by Q668, E682, and N684. 3 residues coordinate Mn(2+): Q668, E682, and N684. K747 carries the N6-acetyllysine modification. Residues 934–1455 are CPSase B; sequence HVLVLGSGVY…APPLKVHVDC (522 aa). Phosphoserine is present on S1038. The ATP-grasp 2 domain occupies 1052–1243; the sequence is SRLLDTIGIS…LVALATRVIM (192 aa). The ATP site is built by R1088, K1127, I1129, E1134, G1159, V1160, H1161, S1162, Q1202, and E1214. The Mg(2+) site is built by Q1202, E1214, and N1216. Q1202, E1214, and N1216 together coordinate Mn(2+). An MGS-like domain is found at 1308 to 1462; it reads FKIPKKNILL…VDCMTSQKLV (155 aa). Phosphoserine; by PKA is present on S1406. Residue K1411 is modified to N6-acetyllysine. Residues 1456-1788 form a DHOase (dihydroorotase) region; it reads MTSQKLVRLP…VKGTVRRVVL (333 aa). Residues H1471 and H1473 each contribute to the Zn(2+) site. Residues R1475 and N1505 each coordinate (S)-dihydroorotate. Residues K1556, H1590, C1613, H1614, and E1637 each contribute to the Zn(2+) site. K1556 bears the N6-carboxylysine mark. R1661 serves as a coordination point for (S)-dihydroorotate. D1686 contacts Zn(2+). The For DHOase activity role is filled by D1686. Residues H1690 and P1702 each coordinate (S)-dihydroorotate. The interval 1789-1917 is linker; the sequence is RGEVAYIDGQ…GLLHPQTSPL (129 aa). The interval 1811 to 1899 is disordered; that stretch reads KWPQGAVPQL…YPPPPVPRQA (89 aa). Positions 1825–1834 are enriched in polar residues; that stretch reads PATSEMTTTP. S1859 carries the phosphoserine; by RPS6KB1 and PKA modification. Residues 1866-1878 show a composition bias toward basic and acidic residues; that stretch reads EEPKEKSSRKVAE. S1873 is subject to Phosphoserine; by PKC; in vitro. A Phosphothreonine modification is found at T1884. Phosphoserine occurs at positions 1900 and 1938. Residues 1918–2225 are ATCase (Aspartate transcarbamylase); sequence LHSLVGQHIL…ALLATVLGRF (308 aa). Carbamoyl phosphate is bound by residues R1975 and T1976. L-aspartate is bound at residue K2003. The carbamoyl phosphate site is built by R2024, H2052, and Q2055. Positions 2085 and 2146 each coordinate L-aspartate. M2185 and P2186 together coordinate carbamoyl phosphate.

This sequence in the N-terminal section; belongs to the CarA family. In the 2nd section; belongs to the CarB family. It in the 3rd section; belongs to the metallo-dependent hydrolases superfamily. DHOase family. CAD subfamily. The protein in the C-terminal section; belongs to the aspartate/ornithine carbamoyltransferase superfamily. ATCase family. In terms of assembly, homohexamer. Interacts with CIPC. The cofactor is Zn(2+). Mg(2+) is required as a cofactor. It depends on Mn(2+) as a cofactor. In terms of processing, activated by MAP kinase (Erk1/2) phosphorylation just prior to the S phase of the cell cycle, when the demand for pyrimidine nucleotides is greatest, and down-regulated as the cells emerge from S phase by protein kinase A (PKA) phosphorylation. Phosphorylation at Ser-1859 by RPS6KB1 downstream of MTOR promotes oligomerization and stimulates dihydroorotase activity. Phosphorylation at Ser-1406 reduces sensitivity to feedback inhibition by UTP.

The protein resides in the cytoplasm. Its subcellular location is the nucleus. The enzyme catalyses hydrogencarbonate + L-glutamine + 2 ATP + H2O = carbamoyl phosphate + L-glutamate + 2 ADP + phosphate + 2 H(+). The catalysed reaction is L-glutamine + H2O = L-glutamate + NH4(+). It carries out the reaction hydrogencarbonate + NH4(+) + 2 ATP = carbamoyl phosphate + 2 ADP + phosphate + 2 H(+). It catalyses the reaction carbamoyl phosphate + L-aspartate = N-carbamoyl-L-aspartate + phosphate + H(+). The enzyme catalyses (S)-dihydroorotate + H2O = N-carbamoyl-L-aspartate + H(+). It participates in pyrimidine metabolism; UMP biosynthesis via de novo pathway; (S)-dihydroorotate from bicarbonate: step 1/3. The protein operates within pyrimidine metabolism; UMP biosynthesis via de novo pathway; (S)-dihydroorotate from bicarbonate: step 2/3. It functions in the pathway pyrimidine metabolism; UMP biosynthesis via de novo pathway; (S)-dihydroorotate from bicarbonate: step 3/3. Its activity is regulated as follows. Allosterically regulated and controlled by phosphorylation. 5-phosphoribose 1-diphosphate (PRPP) is an activator while UMP and UTP are inhibitors of the CPSase reaction. In terms of biological role, multifunctional protein that encodes the first 3 enzymatic activities of the de novo pyrimidine pathway: carbamoylphosphate synthetase (CPSase; EC 6.3.5.5), aspartate transcarbamylase (ATCase; EC 2.1.3.2) and dihydroorotase (DHOase; EC 3.5.2.3). The CPSase-function is accomplished in 2 steps, by a glutamine-dependent amidotransferase activity (GATase) that binds and cleaves glutamine to produce ammonia, followed by an ammonium-dependent carbamoyl phosphate synthetase, which reacts with the ammonia, hydrogencarbonate and ATP to form carbamoyl phosphate. The endogenously produced carbamoyl phosphate is sequestered and channeled to the ATCase active site. ATCase then catalyzes the formation of carbamoyl-L-aspartate from L-aspartate and carbamoyl phosphate. In the last step, DHOase catalyzes the cyclization of carbamoyl aspartate to dihydroorotate. In Homo sapiens (Human), this protein is Multifunctional protein CAD.